The primary structure comprises 189 residues: Elongation factor P (189 aa).

This sequence belongs to the elongation factor P family.

It is found in the cytoplasm. It functions in the pathway protein biosynthesis; polypeptide chain elongation. In terms of biological role, involved in peptide bond synthesis. Stimulates efficient translation and peptide-bond synthesis on native or reconstituted 70S ribosomes in vitro. Probably functions indirectly by altering the affinity of the ribosome for aminoacyl-tRNA, thus increasing their reactivity as acceptors for peptidyl transferase. The chain is Elongation factor P from Ehrlichia ruminantium (strain Gardel).